Here is a 572-residue protein sequence, read N- to C-terminus: [Pyruvate dehydrogenase [acetyl-transferring]]-phosphatase 1, mitochondrial (572 aa).

The segment at 95-122 (NTSGNINMPSPNPKGTETQKSQRSQNDQ) is disordered. In terms of domain architecture, PPM-type phosphatase spans 153 to 543 (RYDVAQLPSN…DDLTVTVAFF (391 aa)). Asp197, Gly198, Asp424, and Asp480 together coordinate Mn(2+). The span at 470 to 480 (EAQRPAFRYKD) shows a compositional bias: basic and acidic residues. The tract at residues 470-492 (EAQRPAFRYKDNNSSSPSGSNPE) is disordered. Residues 481–491 (NNSSSPSGSNP) are compositionally biased toward low complexity.

Belongs to the PP2C family. Mg(2+) is required as a cofactor. Requires Mn(2+) as cofactor. Processed by mitochondrial inner membrane protease (IMP) complex and released to the intermembrane space.

It localises to the mitochondrion intermembrane space. The catalysed reaction is O-phospho-L-seryl-[pyruvate dehydrogenase E1 alpha subunit] + H2O = L-seryl-[pyruvate dehydrogenase E1 alpha subunit] + phosphate. Its function is as follows. Catalyzes the dephosphorylation and concomitant reactivation of the E1 alpha subunit (PDA1) of the pyruvate dehydrogenase complex. This chain is [Pyruvate dehydrogenase [acetyl-transferring]]-phosphatase 1, mitochondrial (PTC5), found in Saccharomyces cerevisiae (strain ATCC 204508 / S288c) (Baker's yeast).